The following is a 161-amino-acid chain: Globin CTT-IX (161 aa).

An N-terminal signal peptide occupies residues 1–16; sequence MKFFIVLALCIVGAIA. The Globin domain occupies 18-161; it reads PVSSDQANAI…NIFGMIFAHL (144 aa). 2 residues coordinate heme b: His-76 and His-111.

The protein belongs to the globin family. In terms of assembly, homodimer.

The chain is Globin CTT-IX (CTT-9) from Chironomus thummi thummi (Midge).